The chain runs to 1453 residues: Collagen alpha-1(I) chain (1453 aa).

Residues 1–22 (MFSFVDSRLLLLIAATVLLTRG) form the signal peptide. A propeptide spans 23 to 151 (EGEEDIQTGS…PPGLGGNFAP (129 aa)) (N-terminal propeptide). Positions 31–89 (GSCVQDGLTYNDKDVWKPEPCQICVCDSGNILCDEVICEDTSDCPNAEIPFGECCPICP) constitute a VWFC domain. The tract at residues 98 to 1203 (PESAGVEGPK…PQEKAHDGGR (1106 aa)) is disordered. Residues 106–116 (PKGDTGPRGDR) show a composition bias toward basic and acidic residues. Residues 131–143 (PGLPGPPGPPGPP) are compositionally biased toward pro residues. The residue at position 152 (Gln152) is a Pyrrolidone carboxylic acid. Lys160 is subject to Allysine. Over residues 162-176 (AGVAVPGPMGPAGPR) the composition is skewed to low complexity. Residues Pro179, Pro182, Pro185, Pro194, Pro197, Pro200, Pro215, Pro230, Pro236, Pro245, and Pro251 each carry the 4-hydroxyproline modification. The segment covering 187–206 (PQGFQGPPGEPGEPGASGPM) has biased composition (low complexity). Lys254 is subject to 5-hydroxylysine; alternate. A glycan (O-linked (Gal...) hydroxylysine; partial) is linked at Lys254. Residues 265-284 (AKGQPGPAGPKGEPGSPGEN) show a composition bias toward low complexity. 4-hydroxyproline occurs at positions 269, 278, 281, 287, 296, 302, 317, 323, 332, and 335. Residues 307-319 (PAGARGNDGAPGA) show a composition bias toward low complexity. Residues 320 to 334 (AGPPGPTGPAGPPGF) are compositionally biased toward pro residues. The span at 350–361 (RGSEGPQGSRGE) shows a compositional bias: low complexity. 4-hydroxyproline occurs at positions 362, 365, 377, 383, 392, 398, 401, and 416. The span at 368–418 (AGAAGPAGNPGADGQPGAKGATGAPGIAGAPGFPGARGPSGPQGPSGAPGP) shows a compositional bias: low complexity. 5-hydroxylysine is present on Lys419. A 4-hydroxyproline mark is found at Pro425, Pro428, Pro440, Pro449, Pro464, Pro470, Pro479, and Pro485. Residues 463 to 482 (EPGPAGLPGPAGERGAPGSR) show a composition bias toward low complexity. 5-hydroxylysine is present on Lys494. 31 positions are modified to 4-hydroxyproline: Pro497, Pro503, Pro512, Pro518, Pro524, Pro533, Pro536, Pro545, Pro554, Pro560, Pro572, Pro581, Pro584, Pro590, Pro593, Pro611, Pro629, Pro635, Pro641, Pro647, Pro653, Pro659, Pro671, Pro680, Pro692, Pro704, Pro707, Pro713, Pro719, Pro728, and Pro737. Residues 527-581 (KGLTGSPGSPGPDGKTGPPGPAGQDGRPGPAGPPGARGQAGVMGFPGPKGAAGEP) are compositionally biased toward low complexity. Positions 623–664 (QGPAGAPGFQGLPGPAGPPGEAGKPGEQGVPGNAGAPGPAGA) are enriched in low complexity. Positions 685–722 (PRGANGAPGNDGAKGDAGAPGAPGNEGPPGLEGMPGER) are enriched in low complexity. 5-hydroxylysine is present on Lys740. 4-hydroxyproline is present on residues Pro746, Pro761, Pro767, Pro776, Pro788, Pro794, Pro797, Pro806, Pro812, Pro830, Pro839, and Pro848. Low complexity predominate over residues 800-827 (AGFAGPPGADGQPGAKGETGDAGAKGDA). The segment covering 835–883 (PTGAPGPAGZVGAPGPKGARGSAGPPGATGFPGAAGRVGPPGPSGNIGL) has biased composition (low complexity). 5-hydroxylysine is present on Lys851. Pro860 and Pro866 each carry 4-hydroxyproline. Pro874 carries the post-translational modification 3-hydroxyproline. A 4-hydroxyproline mark is found at Pro875, Pro884, Pro887, Pro908, Pro911, Pro917, Pro920, Pro926, Pro935, Pro953, Pro962, Pro965, Pro971, Pro986, Pro992, Pro998, Pro1007, and Pro1013. Over residues 890-908 (AGKZGSKGPRGETGPAGRP) the composition is skewed to low complexity. Residues 910–920 (EPGPAGPPGPP) are compositionally biased toward pro residues. Over residues 985–995 (PPGPMGPPGLA) the composition is skewed to pro residues. Residues 997 to 1021 (PPGEAGREGAPGAEGAPGRDGAAGP) are compositionally biased toward low complexity. 5-hydroxylysine; partial is present on Lys1022. Over residues 1031 to 1046 (AGPPGAPGAPGAPGPV) the composition is skewed to pro residues. 4-hydroxyproline occurs at positions 1034, 1037, 1040, and 1067. The segment covering 1070–1081 (AGARGPAGPQGP) has biased composition (low complexity). Basic and acidic residues predominate over residues 1082–1096 (RGDKGETGEQGDRGM). Residue Lys1085 is modified to 5-hydroxylysine; partial. The residue at position 1097 (Lys1097) is a 5-hydroxylysine; alternate. The O-linked (Gal...) hydroxylysine; partial glycan is linked to Lys1097. A 4-hydroxyproline mark is found at Pro1109, Pro1112, Pro1115, Pro1133, and Pro1148. A compositionally biased stretch (low complexity) spans 1115 to 1139 (PGEQGPSGASGPAGPRGPPGSAGAA). Pro1153 bears the 3-hydroxyproline mark. Pro1154 carries the post-translational modification 4-hydroxyproline. Pro residues predominate over residues 1166-1181 (VGPPGPPGPPGPPGPP). A 3-hydroxyproline modification is found at Pro1168. Residue Pro1169 is modified to 4-hydroxyproline. Pro1171 bears the 3-hydroxyproline mark. Pro1172 carries the 4-hydroxyproline modification. Pro1174 carries the post-translational modification 3-hydroxyproline. Residues Pro1175, Pro1178, and Pro1181 each carry the 4-hydroxyproline modification. Position 1197 is an allysine (Lys1197). Residues 1208 to 1453 (DDANVMRDRD…GIDIGPVCFL (246 aa)) constitute a propeptide, C-terminal propeptide. The region spanning 1218–1453 (LEVDTTLKSL…GIDIGPVCFL (236 aa)) is the Fibrillar collagen NC1 domain. 3 disulfides stabilise this stretch: Cys1248/Cys1280, Cys1288/Cys1451, and Cys1359/Cys1404. Ca(2+)-binding residues include Asp1266, Asn1268, Gln1269, Cys1271, and Asp1274. An N-linked (GlcNAc...) asparagine glycan is attached at Asn1354.

Belongs to the fibrillar collagen family. Trimers of one alpha 2(I) and two alpha 1(I) chains. Contains mostly 4-hydroxyproline. Proline residues at the third position of the tripeptide repeating unit (G-X-Y) are 4-hydroxylated in some or all of the chains. In terms of processing, contains 3-hydroxyproline. This modification occurs on the first proline residue in the sequence motif Gly-Pro-Hyp, where Hyp is 4-hydroxyproline. Post-translationally, lysine residues at the third position of the tripeptide repeating unit (G-X-Y) are 5-hydroxylated in some or all of the chains. O-glycosylated on hydroxylated lysine residues. The O-linked glycan consists of a Glc-Gal disaccharide. In terms of tissue distribution, forms the fibrils of tendon, ligaments and bones. In bones the fibrils are mineralized with calcium hydroxyapatite.

It is found in the secreted. The protein localises to the extracellular space. Its subcellular location is the extracellular matrix. Type I collagen is a member of group I collagen (fibrillar forming collagen). The sequence is that of Collagen alpha-1(I) chain (COL1A1) from Gallus gallus (Chicken).